Reading from the N-terminus, the 180-residue chain is Pituitary tumor-transforming gene 1 protein-interacting protein (180 aa).

The first 32 residues, 1–32 (MAPGVARGPTPYWRLRLGGAALLLLLIPVAAA), serve as a signal peptide directing secretion. Residues 33–96 (QEPPGAACSQ…RWGVCWVNFE (64 aa)) are Extracellular-facing. A PSI domain is found at 39–92 (ACSQNTNKTCEECLKNVSCLWCNTNKACLDYPVTSVLPPASLCKLSSARWGVCW). Asn-45 and Asn-54 each carry an N-linked (GlcNAc...) asparagine glycan. A helical membrane pass occupies residues 97–117 (ALIITMSVVGGTLLLGIAICC). Topologically, residues 118 to 180 (CCCCRRKRSR…ENPYARFENN (63 aa)) are cytoplasmic. Residues 130–165 (DRSEEKAMREREERRIRQEERRAEMKTRHDEIRKKY) adopt a coiled-coil conformation. Residues 131–157 (RSEEKAMREREERRIRQEERRAEMKTR) are disordered. Tyr-174 carries the phosphotyrosine modification.

As to quaternary structure, interacts with PTTG1. Ubiquitous.

Its subcellular location is the membrane. The protein resides in the cytoplasm. The protein localises to the nucleus. Its function is as follows. May facilitate PTTG1 nuclear translocation. The polypeptide is Pituitary tumor-transforming gene 1 protein-interacting protein (PTTG1IP) (Homo sapiens (Human)).